The sequence spans 595 residues: Elongation factor 4 (595 aa).

The 183-residue stretch at 2 to 184 (SHIRNFSIIA…RLVATIPAPT (183 aa)) folds into the tr-type G domain. GTP-binding positions include 14–19 (DHGKST) and 131–134 (NKMD).

It belongs to the TRAFAC class translation factor GTPase superfamily. Classic translation factor GTPase family. LepA subfamily.

Its subcellular location is the cell inner membrane. It carries out the reaction GTP + H2O = GDP + phosphate + H(+). Its function is as follows. Required for accurate and efficient protein synthesis under certain stress conditions. May act as a fidelity factor of the translation reaction, by catalyzing a one-codon backward translocation of tRNAs on improperly translocated ribosomes. Back-translocation proceeds from a post-translocation (POST) complex to a pre-translocation (PRE) complex, thus giving elongation factor G a second chance to translocate the tRNAs correctly. Binds to ribosomes in a GTP-dependent manner. In Pseudomonas savastanoi pv. phaseolicola (strain 1448A / Race 6) (Pseudomonas syringae pv. phaseolicola (strain 1448A / Race 6)), this protein is Elongation factor 4.